The following is a 78-amino-acid chain: Small ribosomal subunit protein bS18 (78 aa).

Belongs to the bacterial ribosomal protein bS18 family. Part of the 30S ribosomal subunit. Forms a tight heterodimer with protein bS6.

In terms of biological role, binds as a heterodimer with protein bS6 to the central domain of the 16S rRNA, where it helps stabilize the platform of the 30S subunit. This is Small ribosomal subunit protein bS18 from Kineococcus radiotolerans (strain ATCC BAA-149 / DSM 14245 / SRS30216).